The primary structure comprises 370 residues: Lipoyl synthase, mitochondrial (370 aa).

Cys-100, Cys-105, Cys-111, Cys-131, Cys-135, Cys-138, and Ser-346 together coordinate [4Fe-4S] cluster. The Radical SAM core domain occupies 116–335 (DKSRATATIM…KEVAEKLGFL (220 aa)).

Belongs to the radical SAM superfamily. Lipoyl synthase family. [4Fe-4S] cluster is required as a cofactor.

The protein resides in the mitochondrion. It catalyses the reaction [[Fe-S] cluster scaffold protein carrying a second [4Fe-4S](2+) cluster] + N(6)-octanoyl-L-lysyl-[protein] + 2 oxidized [2Fe-2S]-[ferredoxin] + 2 S-adenosyl-L-methionine + 4 H(+) = [[Fe-S] cluster scaffold protein] + N(6)-[(R)-dihydrolipoyl]-L-lysyl-[protein] + 4 Fe(3+) + 2 hydrogen sulfide + 2 5'-deoxyadenosine + 2 L-methionine + 2 reduced [2Fe-2S]-[ferredoxin]. The protein operates within protein modification; protein lipoylation via endogenous pathway; protein N(6)-(lipoyl)lysine from octanoyl-[acyl-carrier-protein]: step 2/2. Functionally, catalyzes the radical-mediated insertion of two sulfur atoms into the C-6 and C-8 positions of the octanoyl moiety bound to the lipoyl domains of lipoate-dependent enzymes, thereby converting the octanoylated domains into lipoylated derivatives. This is Lipoyl synthase, mitochondrial (lip5) from Schizosaccharomyces pombe (strain 972 / ATCC 24843) (Fission yeast).